Here is a 245-residue protein sequence, read N- to C-terminus: DNA polymerase sliding clamp 2 (245 aa).

The protein belongs to the PCNA family. In terms of assembly, homotrimer. The subunits circularize to form a toroid; DNA passes through its center. Replication factor C (RFC) is required to load the toroid on the DNA.

Its function is as follows. Sliding clamp subunit that acts as a moving platform for DNA processing. Responsible for tethering the catalytic subunit of DNA polymerase and other proteins to DNA during high-speed replication. This chain is DNA polymerase sliding clamp 2, found in Sulfolobus acidocaldarius (strain ATCC 33909 / DSM 639 / JCM 8929 / NBRC 15157 / NCIMB 11770).